The primary structure comprises 334 residues: UDP-N-acetylglucosamine 4,6-dehydratase (inverting) (334 aa).

NADP(+) is bound by residues 13–16 (TGSF), 37–42 (SRDELK), 61–62 (DV), A81, K85, and 123–124 (LS). Substrate is bound at residue K85. K127 is a catalytic residue. Residues Y135 and K139 each coordinate NADP(+). N167 contacts substrate. 168–172 (VVGSR) contributes to the NADP(+) binding site. The substrate site is built by V175, T193, R252, and E255.

The protein belongs to the polysaccharide synthase family. In terms of assembly, homohexamer. Requires NADP(+) as cofactor.

The catalysed reaction is UDP-N-acetyl-alpha-D-glucosamine = UDP-2-acetamido-2,6-dideoxy-beta-L-arabino-hex-4-ulose + H2O. Its function is as follows. Catalyzes the first step in the biosynthesis of pseudaminic acid, a sialic-acid-like sugar that is used to modify flagellin. Has both C6 dehydratase and C5 epimerase activities that result in the production of both UDP-2-acetamido-2,6-dideoxy-beta-L-arabino-4-hexulose and UDP-2-acetamido-2,6-dideoxy-alpha-D-xylo-4-hexulose. This is UDP-N-acetylglucosamine 4,6-dehydratase (inverting) (pseB) from Campylobacter jejuni subsp. jejuni serotype O:23/36 (strain 81-176).